We begin with the raw amino-acid sequence, 329 residues long: Acetoacetyl CoA synthase NphT7 (329 aa).

Catalysis depends on residues Cys-115, His-256, and Asn-286.

This sequence belongs to the thiolase-like superfamily. FabH family. As to quaternary structure, homodimer.

The protein localises to the cytoplasm. It catalyses the reaction malonyl-CoA + acetyl-CoA + H(+) = acetoacetyl-CoA + CO2 + CoA. Its pathway is metabolic intermediate biosynthesis; (R)-mevalonate biosynthesis. Its function is as follows. Catalyzes the condensation of acetyl-CoA and malonyl-CoA to form acetoacetyl-CoA and CoA. Does not accept malonyl-[acyl-carrier-protein] as a substrate. Can also convert malonyl-CoA into acetyl-CoA via decarboxylation of malonyl-CoA. In Streptomyces sp. (strain CL190), this protein is Acetoacetyl CoA synthase NphT7 (nphT7).